Here is a 68-residue protein sequence, read N- to C-terminus: Bacteriocin lactococcin-B (68 aa).

Positions 1-21 (MKNQLNFNIVSDEELAEVNGG) are excised as a propeptide.

It localises to the secreted. In terms of biological role, kills Lactococci by dissipating the membrane potential of the cells. The protein is Bacteriocin lactococcin-B (lcnB) of Lactococcus lactis subsp. cremoris (Streptococcus cremoris).